The primary structure comprises 156 residues: Small ribosomal subunit protein uS7 (156 aa).

The protein belongs to the universal ribosomal protein uS7 family. Part of the 30S ribosomal subunit. Contacts proteins S9 and S11.

In terms of biological role, one of the primary rRNA binding proteins, it binds directly to 16S rRNA where it nucleates assembly of the head domain of the 30S subunit. Is located at the subunit interface close to the decoding center, probably blocks exit of the E-site tRNA. This is Small ribosomal subunit protein uS7 from Dichelobacter nodosus (strain VCS1703A).